Reading from the N-terminus, the 396-residue chain is Probable sugar efflux transporter (396 aa).

12 helical membrane passes run 15 to 35, 50 to 70, 81 to 101, 103 to 123, 136 to 156, 169 to 189, 209 to 229, 246 to 266, 275 to 295, 301 to 321, 333 to 353, and 364 to 384; these read VVTL…PVGL, VGIM…PFML, LICL…AWNF, VLVI…SITA, AQAL…GLPI, TFFA…KLLP, PALM…YTAY, FATV…LVFG, SLVS…LPAA, LAIL…GMQV, VAMA…ALVG, and AIGY…VLIF.

This sequence belongs to the major facilitator superfamily. SotB (TC 2.A.1.2) family.

The protein resides in the cell inner membrane. Involved in the efflux of sugars. The physiological role may be the reduction of the intracellular concentration of toxic sugars or sugar metabolites. The chain is Probable sugar efflux transporter from Salmonella schwarzengrund (strain CVM19633).